The chain runs to 321 residues: Dolichyl N-acetyl-alpha-D-glucosaminyl phosphate 3-beta-D-2,3-diacetamido-2,3-dideoxy-beta-D-glucuronosyltransferase (321 aa).

2 consecutive transmembrane segments (helical) span residues 252–272 and 290–310; these read FGFL…FIYI and LYIA…YGFF.

Belongs to the glycosyltransferase 2 family.

The protein resides in the cell membrane. The enzyme catalyses an archaeal dolichyl N-acetyl-alpha-D-glucosaminyl phosphate + UDP-2,3-diacetamido-2,3-dideoxy-alpha-D-glucuronate = an archaeal dolichyl 3-O-(2,3-diacetamido-2,3-dideoxy- beta-D-glucuronosyl)-N-acetyl- alpha-D-glucosaminyl phosphate + UDP + H(+). It functions in the pathway cell surface structure biogenesis; S-layer biogenesis. The protein operates within protein modification; protein glycosylation. Involved in the assembly of an N-linked disaccharide that decorates the S-layer glycoprotein and flagellins. AglC catalyzes the transfer of 2,3-diacetamido-2,3-dideoxy-alpha-D-glucuronic acid (Glc-2,3-diNAcA) from uridine 5'-diphospho 2,3-diacetamido-2,3-dideoxy-alpha-D-glucuronic acid (UDP-Glc-2,3-diNAcA) to the AglK product Dol-P-GlcNAc to yield Dol-P-GlcNAc-Glc-2,3-diNAcA. AglC is specific for the monophosphate-linked Dol-P-GlcNAc. The sequence is that of Dolichyl N-acetyl-alpha-D-glucosaminyl phosphate 3-beta-D-2,3-diacetamido-2,3-dideoxy-beta-D-glucuronosyltransferase from Methanococcus voltae.